The following is a 183-amino-acid chain: Isopentenyl-diphosphate Delta-isomerase (183 aa).

Mn(2+) is bound by residues H26 and H33. In terms of domain architecture, Nudix hydrolase spans 31–165; sequence SLHLAFSSWL…PWAFSPWMVS (135 aa). The active site involves C68. Residue H70 coordinates Mn(2+). E88 lines the Mg(2+) pocket. Positions 115 and 117 each coordinate Mn(2+). Residue E117 is part of the active site.

The protein belongs to the IPP isomerase type 1 family. Homodimer. Mg(2+) serves as cofactor. Mn(2+) is required as a cofactor.

It localises to the cytoplasm. It catalyses the reaction isopentenyl diphosphate = dimethylallyl diphosphate. It functions in the pathway isoprenoid biosynthesis; dimethylallyl diphosphate biosynthesis; dimethylallyl diphosphate from isopentenyl diphosphate: step 1/1. Its function is as follows. Catalyzes the 1,3-allylic rearrangement of the homoallylic substrate isopentenyl (IPP) to its highly electrophilic allylic isomer, dimethylallyl diphosphate (DMAPP). The protein is Isopentenyl-diphosphate Delta-isomerase of Enterobacter sp. (strain 638).